The sequence spans 377 residues: Queuine tRNA-ribosyltransferase (377 aa).

D92 acts as the Proton acceptor in catalysis. Substrate contacts are provided by residues 92 to 96 (DSGGF), D146, Q190, and G217. Positions 248–254 (GVGRPED) are RNA binding. The Nucleophile role is filled by D267. Residues 272-276 (TRHAR) are RNA binding; important for wobble base 34 recognition. The Zn(2+) site is built by C305, C307, C310, and H337.

It belongs to the queuine tRNA-ribosyltransferase family. As to quaternary structure, homodimer. Within each dimer, one monomer is responsible for RNA recognition and catalysis, while the other monomer binds to the replacement base PreQ1. Zn(2+) is required as a cofactor.

The enzyme catalyses 7-aminomethyl-7-carbaguanine + guanosine(34) in tRNA = 7-aminomethyl-7-carbaguanosine(34) in tRNA + guanine. The protein operates within tRNA modification; tRNA-queuosine biosynthesis. Its function is as follows. Catalyzes the base-exchange of a guanine (G) residue with the queuine precursor 7-aminomethyl-7-deazaguanine (PreQ1) at position 34 (anticodon wobble position) in tRNAs with GU(N) anticodons (tRNA-Asp, -Asn, -His and -Tyr). Catalysis occurs through a double-displacement mechanism. The nucleophile active site attacks the C1' of nucleotide 34 to detach the guanine base from the RNA, forming a covalent enzyme-RNA intermediate. The proton acceptor active site deprotonates the incoming PreQ1, allowing a nucleophilic attack on the C1' of the ribose to form the product. After dissociation, two additional enzymatic reactions on the tRNA convert PreQ1 to queuine (Q), resulting in the hypermodified nucleoside queuosine (7-(((4,5-cis-dihydroxy-2-cyclopenten-1-yl)amino)methyl)-7-deazaguanosine). This Xylella fastidiosa (strain Temecula1 / ATCC 700964) protein is Queuine tRNA-ribosyltransferase.